The chain runs to 265 residues: Isoprenyl transferase (265 aa).

D35 is a catalytic residue. D35 serves as a coordination point for Mg(2+). Residues 36–39, W40, R48, H52, and 80–82 contribute to the substrate site; these read GNGR and SIE. N83 (proton acceptor) is an active-site residue. Residues W84, R86, R203, and 209 to 211 contribute to the substrate site; that span reads RIS. E222 contacts Mg(2+).

It belongs to the UPP synthase family. As to quaternary structure, homodimer. The cofactor is Mg(2+).

In terms of biological role, catalyzes the condensation of isopentenyl diphosphate (IPP) with allylic pyrophosphates generating different type of terpenoids. In Chlorobaculum tepidum (strain ATCC 49652 / DSM 12025 / NBRC 103806 / TLS) (Chlorobium tepidum), this protein is Isoprenyl transferase.